The primary structure comprises 270 residues: Undecaprenyl-diphosphatase 1 (270 aa).

Transmembrane regions (helical) follow at residues Ile-41–Val-61, Phe-88–Phe-108, Lys-117–Ile-137, Phe-192–Ile-212, Leu-218–Phe-238, and Gly-250–Ala-270.

This sequence belongs to the UppP family.

The protein resides in the cell membrane. The enzyme catalyses di-trans,octa-cis-undecaprenyl diphosphate + H2O = di-trans,octa-cis-undecaprenyl phosphate + phosphate + H(+). Its function is as follows. Catalyzes the dephosphorylation of undecaprenyl diphosphate (UPP). Confers resistance to bacitracin. This Bacillus licheniformis (strain ATCC 14580 / DSM 13 / JCM 2505 / CCUG 7422 / NBRC 12200 / NCIMB 9375 / NCTC 10341 / NRRL NRS-1264 / Gibson 46) protein is Undecaprenyl-diphosphatase 1.